The following is a 440-amino-acid chain: Glutamate-1-semialdehyde 2,1-aminomutase (440 aa).

Residue Lys-273 is modified to N6-(pyridoxal phosphate)lysine.

The protein belongs to the class-III pyridoxal-phosphate-dependent aminotransferase family. HemL subfamily. As to quaternary structure, homodimer. The cofactor is pyridoxal 5'-phosphate.

It localises to the cytoplasm. The catalysed reaction is (S)-4-amino-5-oxopentanoate = 5-aminolevulinate. It participates in porphyrin-containing compound metabolism; protoporphyrin-IX biosynthesis; 5-aminolevulinate from L-glutamyl-tRNA(Glu): step 2/2. The sequence is that of Glutamate-1-semialdehyde 2,1-aminomutase from Alkaliphilus metalliredigens (strain QYMF).